A 197-amino-acid chain; its full sequence is Imidazoleglycerol-phosphate dehydratase (197 aa).

Belongs to the imidazoleglycerol-phosphate dehydratase family.

Its subcellular location is the cytoplasm. The enzyme catalyses D-erythro-1-(imidazol-4-yl)glycerol 3-phosphate = 3-(imidazol-4-yl)-2-oxopropyl phosphate + H2O. Its pathway is amino-acid biosynthesis; L-histidine biosynthesis; L-histidine from 5-phospho-alpha-D-ribose 1-diphosphate: step 6/9. This is Imidazoleglycerol-phosphate dehydratase from Syntrophobacter fumaroxidans (strain DSM 10017 / MPOB).